Reading from the N-terminus, the 352-residue chain is Phenylalanine--tRNA ligase alpha subunit (352 aa).

Position 258 (Glu258) interacts with Mg(2+).

It belongs to the class-II aminoacyl-tRNA synthetase family. Phe-tRNA synthetase alpha subunit type 1 subfamily. As to quaternary structure, tetramer of two alpha and two beta subunits. Requires Mg(2+) as cofactor.

It is found in the cytoplasm. The enzyme catalyses tRNA(Phe) + L-phenylalanine + ATP = L-phenylalanyl-tRNA(Phe) + AMP + diphosphate + H(+). This Staphylococcus haemolyticus (strain JCSC1435) protein is Phenylalanine--tRNA ligase alpha subunit.